The primary structure comprises 224 residues: 2-C-methyl-D-erythritol 4-phosphate cytidylyltransferase (224 aa).

It belongs to the IspD/TarI cytidylyltransferase family. IspD subfamily.

The catalysed reaction is 2-C-methyl-D-erythritol 4-phosphate + CTP + H(+) = 4-CDP-2-C-methyl-D-erythritol + diphosphate. It functions in the pathway isoprenoid biosynthesis; isopentenyl diphosphate biosynthesis via DXP pathway; isopentenyl diphosphate from 1-deoxy-D-xylulose 5-phosphate: step 2/6. Functionally, catalyzes the formation of 4-diphosphocytidyl-2-C-methyl-D-erythritol from CTP and 2-C-methyl-D-erythritol 4-phosphate (MEP). The sequence is that of 2-C-methyl-D-erythritol 4-phosphate cytidylyltransferase from Caldicellulosiruptor saccharolyticus (strain ATCC 43494 / DSM 8903 / Tp8T 6331).